The sequence spans 489 residues: N-succinylglutamate 5-semialdehyde dehydrogenase 1 (489 aa).

223–228 (GSSRTG) contributes to the NAD(+) binding site. Residues Glu-246 and Cys-280 contribute to the active site.

The protein belongs to the aldehyde dehydrogenase family. AstD subfamily.

The catalysed reaction is N-succinyl-L-glutamate 5-semialdehyde + NAD(+) + H2O = N-succinyl-L-glutamate + NADH + 2 H(+). It functions in the pathway amino-acid degradation; L-arginine degradation via AST pathway; L-glutamate and succinate from L-arginine: step 4/5. Functionally, catalyzes the NAD-dependent reduction of succinylglutamate semialdehyde into succinylglutamate. The sequence is that of N-succinylglutamate 5-semialdehyde dehydrogenase 1 from Pseudoalteromonas translucida (strain TAC 125).